The sequence spans 364 residues: tRNA-specific 2-thiouridylase MnmA (364 aa).

ATP is bound by residues 6–13 (AMSGGVDS) and leucine 32. The active-site Nucleophile is cysteine 101. The cysteines at positions 101 and 193 are disulfide-linked. An ATP-binding site is contributed by glycine 125. Positions 143–145 (KDQ) are interaction with tRNA. The active-site Cysteine persulfide intermediate is the cysteine 193.

Belongs to the MnmA/TRMU family.

Its subcellular location is the cytoplasm. The enzyme catalyses S-sulfanyl-L-cysteinyl-[protein] + uridine(34) in tRNA + AH2 + ATP = 2-thiouridine(34) in tRNA + L-cysteinyl-[protein] + A + AMP + diphosphate + H(+). In terms of biological role, catalyzes the 2-thiolation of uridine at the wobble position (U34) of tRNA, leading to the formation of s(2)U34. The protein is tRNA-specific 2-thiouridylase MnmA of Rhodococcus jostii (strain RHA1).